We begin with the raw amino-acid sequence, 254 residues long: Phosphonates import ATP-binding protein PhnC (254 aa).

An ABC transporter domain is found at 2–246 (IQLKNVSKIY…VFDDIYNGGN (245 aa)). ATP is bound at residue 35 to 42 (GLSGAGKS).

The protein belongs to the ABC transporter superfamily. Phosphonates importer (TC 3.A.1.9.1) family. As to quaternary structure, the complex is composed of two ATP-binding proteins (PhnC), two transmembrane proteins (PhnE) and a solute-binding protein (PhnD).

Its subcellular location is the cell membrane. The catalysed reaction is phosphonate(out) + ATP + H2O = phosphonate(in) + ADP + phosphate + H(+). Part of the ABC transporter complex PhnCDE involved in phosphonates import. Responsible for energy coupling to the transport system. This is Phosphonates import ATP-binding protein PhnC from Lactobacillus johnsonii (strain CNCM I-12250 / La1 / NCC 533).